The following is a 597-amino-acid chain: Lipoprotein LpqB (597 aa).

The first 28 residues, 1–28 (MTPGRRSALLSRSVCGAIVLAVLVTVSG), serve as a signal peptide directing secretion. Cys29 carries N-palmitoyl cysteine lipidation. A lipid anchor (S-diacylglycerol cysteine) is attached at Cys29. Positions 38–51 (PQAIGTINRDSPGS) are enriched in polar residues. The tract at residues 38–58 (PQAIGTINRDSPGSSVAAPAP) is disordered.

It belongs to the LpqB lipoprotein family.

It is found in the cell membrane. The sequence is that of Lipoprotein LpqB from Rhodococcus jostii (strain RHA1).